Consider the following 712-residue polypeptide: T-box transcription factor TBX2 (712 aa).

Residues 109–287 constitute a DNA-binding region (T-box); sequence LEAKELWDQF…NNPFAKGFRD (179 aa). The segment at 313 to 450 is disordered; sequence PERDGAESDA…EGKEQGLAPL (138 aa). The span at 326 to 336 shows a compositional bias: pro residues; that stretch reads DPPPAREPPTS. Phosphoserine occurs at positions 336, 342, and 360. Composition is skewed to basic and acidic residues over residues 363–372, 391–409, and 421–444; these read EPERLSEERA, TEPE…KEPA, and SLEK…EGKE. A repression domain 1 (RD1) region spans residues 518–601; it reads GGNGGGGGPG…ATSAAAAAAA (84 aa). Residues Ser622, Ser653, Ser657, and Ser676 each carry the phosphoserine modification. The interval 637-687 is disordered; it reads LTTGLASEGSKAAGGNSREPSPLPELALRKVGAPSRGALSPSGSAKEAANE.

As to quaternary structure, binds DNA as a monomer. Interacts with PML (isoform PML-2, isoform PML-3 and isoform PML-4). As to expression, expressed primarily in adult in kidney, lung, and placenta. Weak expression in heart and ovary.

The protein localises to the nucleus. In terms of biological role, transcription factor which acts as a transcriptional repressor. May also function as a transcriptional activator. Binds to the palindromic T site 5'-TTCACACCTAGGTGTGAA-3' DNA sequence, or a half-site, which are present in the regulatory region of several genes. Required for cardiac atrioventricular canal formation. May cooperate with NKX2.5 to negatively modulate expression of NPPA/ANF in the atrioventricular canal. May play a role as a positive regulator of TGFB2 expression, perhaps acting in concert with GATA4 in the developing outflow tract myocardium. Plays a role in limb pattern formation. Acts as a transcriptional repressor of ADAM10 gene expression, perhaps in concert with histone deacetylase HDAC1 as cofactor. Involved in branching morphogenesis in both developing lungs and adult mammary glands, via negative modulation of target genes; acting redundantly with TBX3. Required, together with TBX3, to maintain cell proliferation in the embryonic lung mesenchyme; perhaps acting downstream of SHH, BMP and TGFbeta signaling. Involved in modulating early inner ear development, acting independently of, and also redundantly with TBX3, in different subregions of the developing ear. Acts as a negative regulator of PML function in cellular senescence. Acts as a negative regulator of expression of CDKN1A/p21, IL33 and CCN4; repression of CDKN1A is enhanced in response to UV-induced stress, perhaps as a result of phosphorylation by p38 MAPK. Negatively modulates expression of CDKN2A/p14ARF and CDH1/E-cadherin. Plays a role in induction of the epithelial-mesenchymal transition (EMT). Plays a role in melanocyte proliferation, perhaps via regulation of cyclin CCND1. Involved in melanogenesis, acting via negative modulation of expression of DHICA oxidase/TYRP1 and P protein/OCA2. Involved in regulating retinal pigment epithelium (RPE) cell proliferation, perhaps via negatively modulating transcription of the transcription factor CEBPD. In Homo sapiens (Human), this protein is T-box transcription factor TBX2 (TBX2).